The following is a 366-amino-acid chain: Mitogen-activated protein kinase sakA (366 aa).

Residues 20–299 (YTDLQPVGMG…AGEALAHEYL (280 aa)) form the Protein kinase domain. ATP contacts are provided by residues 26–34 (VGMGAFGLV) and K49. Residue D141 is the Proton acceptor of the active site. At T171 the chain carries Phosphothreonine. A TXY motif is present at residues 171-173 (TGY). Y173 carries the post-translational modification Phosphotyrosine.

Belongs to the protein kinase superfamily. Ser/Thr protein kinase family. MAP kinase subfamily. HOG1 sub-subfamily. In terms of assembly, interacts with the AGC kinase ypkA. Interacts with sakA upon osmotic and cell wall stresses. Requires Mg(2+) as cofactor. In terms of processing, dually phosphorylated on Thr-171 and Tyr-173, which activates the enzyme. Environmental stresses such as high temperature, osmotic stress, cold stress or ethanol stress modulate the activation of sakA via phosphorylation.

The protein localises to the cytoplasm. Its subcellular location is the nucleus. The enzyme catalyses L-seryl-[protein] + ATP = O-phospho-L-seryl-[protein] + ADP + H(+). The catalysed reaction is L-threonyl-[protein] + ATP = O-phospho-L-threonyl-[protein] + ADP + H(+). Activated by tyrosine and threonine phosphorylation. Deactivated by protein phosphatase 2C homolog 2 ptcB. Proline-directed serine/threonine-protein kinase involved in a signal transduction pathway that is activated by changes in the osmolarity of the extracellular environment. Controls osmotic regulation of transcription of target genes. Involved in environmental stress response. With mpkC, plays a redundant or cooperative role in the conidial stress resistance. Also plays a supportive role in osmotic stress adaptation when sakA is deficient. Involved in paradoxical growth, the cell wall integrity (CWI) pathway and biofilm formation. Also collaborates with mpkC to allow ful virulence in a neutropenic murine model ofinvasive pulmonary aspergillosis. MpkC and sakA have both independent and collaborative functions during the transcriptional response to transient osmotic stress and sakA not only seems to modulate pathways involved in nucleotide, fatty acid, nitrogen and organic acid biosynthesis but is also important for the activation of genes involved in mitochondrial and endoplasmic reticulum functions. The protein is Mitogen-activated protein kinase sakA of Aspergillus fumigatus (strain ATCC MYA-4609 / CBS 101355 / FGSC A1100 / Af293) (Neosartorya fumigata).